The following is a 154-amino-acid chain: Transcriptional repressor NrdR (154 aa).

Residues 3–34 (CPFCGANDTKVIDSRLVAEGEQVRRRRECLAC) fold into a zinc finger. The region spanning 49-139 (PRLIKQDGSR…VYRRFQDLNE (91 aa)) is the ATP-cone domain.

Belongs to the NrdR family. It depends on Zn(2+) as a cofactor.

In terms of biological role, negatively regulates transcription of bacterial ribonucleotide reductase nrd genes and operons by binding to NrdR-boxes. The polypeptide is Transcriptional repressor NrdR (Pseudomonas savastanoi pv. phaseolicola (strain 1448A / Race 6) (Pseudomonas syringae pv. phaseolicola (strain 1448A / Race 6))).